Consider the following 335-residue polypeptide: Anthranilate phosphoribosyltransferase (335 aa).

Residues glycine 79, 82-83 (GD), serine 87, 89-92 (NIST), 107-115 (KHGNRSITS), and serine 119 each bind 5-phospho-alpha-D-ribose 1-diphosphate. Position 79 (glycine 79) interacts with anthranilate. Serine 91 contributes to the Mg(2+) binding site. An anthranilate-binding site is contributed by asparagine 110. An anthranilate-binding site is contributed by arginine 165. The Mg(2+) site is built by aspartate 224 and glutamate 225.

Belongs to the anthranilate phosphoribosyltransferase family. Homodimer. The cofactor is Mg(2+).

The catalysed reaction is N-(5-phospho-beta-D-ribosyl)anthranilate + diphosphate = 5-phospho-alpha-D-ribose 1-diphosphate + anthranilate. The protein operates within amino-acid biosynthesis; L-tryptophan biosynthesis; L-tryptophan from chorismate: step 2/5. In terms of biological role, catalyzes the transfer of the phosphoribosyl group of 5-phosphorylribose-1-pyrophosphate (PRPP) to anthranilate to yield N-(5'-phosphoribosyl)-anthranilate (PRA). The chain is Anthranilate phosphoribosyltransferase from Lactococcus lactis subsp. cremoris (strain SK11).